The primary structure comprises 223 residues: MVSFTSLLAAFSVVSGVLTSPIAVVPEVNTALAKRTPSSTGTSGGFYYSFWTDTPNSVTYTNGDAGKFSVSWKNNNGNHVGGKGWRTGSARTIKYSGSYKPNGNSYLAIYGWTRSPLIEYYIVESFGTYNPSTGATSKGQFTVDGSVYDLYTSTRTNAPSIEGTRTFTQFWSVRRTKRTSGSVNTGAHFAAWKKAGMNLGSHDYQILAVEGYKSSGSATMTVS.

The signal sequence occupies residues 1–19; the sequence is MVSFTSLLAAFSVVSGVLT. A GH11 domain is found at 34 to 223; it reads KRTPSSTGTS…SSGSATMTVS (190 aa). Glutamate 119 acts as the Nucleophile in catalysis. Residues 174 to 184 are nuclear localization signal; it reads RRTKRTSGSVN. The active-site Proton donor is the glutamate 210.

Belongs to the glycosyl hydrolase 11 (cellulase G) family.

The protein localises to the secreted. The protein resides in the host nucleus. The enzyme catalyses Endohydrolysis of (1-&gt;4)-beta-D-xylosidic linkages in xylans.. It functions in the pathway glycan degradation; xylan degradation. Endo-1,4-beta-xylanase involved in the hydrolysis of xylan, a major structural heterogeneous polysaccharide found in plant biomass representing the second most abundant polysaccharide in the biosphere, after cellulose. Acts as an effector that localizes to the host nucleus to contribute to the virulence process. Induces host innate immunity responses; triggers BAK1-and SOBIR1-dependent cell death, salicylic acid signaling and jasmonic acid signaling. Does not exhibit any cell death when transiently expressed in N.benthamiana. This is Ethylene-inducing xylanase 1 from Verticillium dahliae (strain VdLs.17 / ATCC MYA-4575 / FGSC 10137) (Verticillium wilt).